Reading from the N-terminus, the 556-residue chain is Dihydroxy-acid dehydratase (556 aa).

Residue Cys47 participates in [2Fe-2S] cluster binding. Asp79 is a binding site for Mg(2+). Position 120 (Cys120) interacts with [2Fe-2S] cluster. Positions 121 and 122 each coordinate Mg(2+). Lys122 carries the post-translational modification N6-carboxylysine. Cys192 is a [2Fe-2S] cluster binding site. Glu444 provides a ligand contact to Mg(2+). Residue Ser470 is the Proton acceptor of the active site.

This sequence belongs to the IlvD/Edd family. As to quaternary structure, homodimer. [2Fe-2S] cluster serves as cofactor. It depends on Mg(2+) as a cofactor.

The enzyme catalyses (2R)-2,3-dihydroxy-3-methylbutanoate = 3-methyl-2-oxobutanoate + H2O. It catalyses the reaction (2R,3R)-2,3-dihydroxy-3-methylpentanoate = (S)-3-methyl-2-oxopentanoate + H2O. The protein operates within amino-acid biosynthesis; L-isoleucine biosynthesis; L-isoleucine from 2-oxobutanoate: step 3/4. Its pathway is amino-acid biosynthesis; L-valine biosynthesis; L-valine from pyruvate: step 3/4. Functionally, functions in the biosynthesis of branched-chain amino acids. Catalyzes the dehydration of (2R,3R)-2,3-dihydroxy-3-methylpentanoate (2,3-dihydroxy-3-methylvalerate) into 2-oxo-3-methylpentanoate (2-oxo-3-methylvalerate) and of (2R)-2,3-dihydroxy-3-methylbutanoate (2,3-dihydroxyisovalerate) into 2-oxo-3-methylbutanoate (2-oxoisovalerate), the penultimate precursor to L-isoleucine and L-valine, respectively. This Prochlorococcus marinus (strain MIT 9211) protein is Dihydroxy-acid dehydratase.